We begin with the raw amino-acid sequence, 80 residues long: Probable small nuclear ribonucleoprotein G (80 aa).

The 72-residue stretch at 5 to 76 (GQPPDLKKYM…IVTVEALEPV (72 aa)) folds into the Sm domain.

This sequence belongs to the snRNP Sm proteins family.

The protein resides in the nucleus. Functionally, probable common Sm protein, is found in U1 and U2 snRNPs and may be part of the spliceosome. In Arabidopsis thaliana (Mouse-ear cress), this protein is Probable small nuclear ribonucleoprotein G.